A 250-amino-acid polypeptide reads, in one-letter code: 3-deoxy-manno-octulosonate cytidylyltransferase (250 aa).

The protein belongs to the KdsB family.

It is found in the cytoplasm. The enzyme catalyses 3-deoxy-alpha-D-manno-oct-2-ulosonate + CTP = CMP-3-deoxy-beta-D-manno-octulosonate + diphosphate. Its pathway is nucleotide-sugar biosynthesis; CMP-3-deoxy-D-manno-octulosonate biosynthesis; CMP-3-deoxy-D-manno-octulosonate from 3-deoxy-D-manno-octulosonate and CTP: step 1/1. It functions in the pathway bacterial outer membrane biogenesis; lipopolysaccharide biosynthesis. Functionally, activates KDO (a required 8-carbon sugar) for incorporation into bacterial lipopolysaccharide in Gram-negative bacteria. The chain is 3-deoxy-manno-octulosonate cytidylyltransferase from Francisella tularensis subsp. holarctica (strain FTNF002-00 / FTA).